The sequence spans 325 residues: DNA repair and recombination protein RadA (325 aa).

G107–T114 serves as a coordination point for ATP.

This sequence belongs to the eukaryotic RecA-like protein family.

In terms of biological role, involved in DNA repair and in homologous recombination. Binds and assemble on single-stranded DNA to form a nucleoprotein filament. Hydrolyzes ATP in a ssDNA-dependent manner and promotes DNA strand exchange between homologous DNA molecules. This is DNA repair and recombination protein RadA from Methanococcoides burtonii (strain DSM 6242 / NBRC 107633 / OCM 468 / ACE-M).